The following is a 292-amino-acid chain: 4-hydroxy-tetrahydrodipicolinate synthase (292 aa).

Thr-45 contacts pyruvate. Tyr-133 acts as the Proton donor/acceptor in catalysis. The Schiff-base intermediate with substrate role is filled by Lys-161. Ile-203 serves as a coordination point for pyruvate.

It belongs to the DapA family. As to quaternary structure, homotetramer; dimer of dimers.

The protein localises to the cytoplasm. The catalysed reaction is L-aspartate 4-semialdehyde + pyruvate = (2S,4S)-4-hydroxy-2,3,4,5-tetrahydrodipicolinate + H2O + H(+). Its pathway is amino-acid biosynthesis; L-lysine biosynthesis via DAP pathway; (S)-tetrahydrodipicolinate from L-aspartate: step 3/4. In terms of biological role, catalyzes the condensation of (S)-aspartate-beta-semialdehyde [(S)-ASA] and pyruvate to 4-hydroxy-tetrahydrodipicolinate (HTPA). The chain is 4-hydroxy-tetrahydrodipicolinate synthase from Vibrio cholerae serotype O1 (strain ATCC 39541 / Classical Ogawa 395 / O395).